The sequence spans 283 residues: Small ribosomal subunit protein uS2B (283 aa).

The disordered stretch occupies residues 254 to 283 (GQVGQSAWDEEGDWNTTGAAQTSDWANTVA). Positions 267–283 (WNTTGAAQTSDWANTVA) are enriched in polar residues.

It belongs to the universal ribosomal protein uS2 family. As to quaternary structure, component of the small ribosomal subunit. Mature ribosomes consist of a small (40S) and a large (60S) subunit. The 40S subunit contains about 33 different proteins and 1 molecule of RNA (18S). The 60S subunit contains about 49 different proteins and 3 molecules of RNA (25S, 5.8S and 5S). Interacts with rps21.

The protein resides in the cytoplasm. Required for the assembly and/or stability of the 40S ribosomal subunit. Required for the processing of the 20S rRNA-precursor to mature 18S rRNA in a late step of the maturation of 40S ribosomal subunits. This Schizosaccharomyces japonicus (strain yFS275 / FY16936) (Fission yeast) protein is Small ribosomal subunit protein uS2B (rps0b).